A 264-amino-acid chain; its full sequence is MRIDVVTLFPELFEGFLAIGMVGRALASGALAVRTRSPREFGLGRHRSVDDTPYGGGSGMVMRVDCIVRCLEALDEAAAEGVASSAPPGADATASSGPLPRAHRVLLTPQGQPFRQEKAIELAARPAVALVCGRYEGFDERVRAFVDEEISLGDFVMTGGEVAAMAVIDACVRLLPGVLGNAVSAEHESHSPALAGLLEYPQYTRPVEFRGHKVPDVLQQGNHAAIARWRRAEAELRTAQRRPDLWRKARGGEPPADESGEVRR.

Residues glycine 133 and 152-157 (LGDFVM) each bind S-adenosyl-L-methionine. The segment covering 240-251 (QRRPDLWRKARG) has biased composition (basic and acidic residues). The interval 240-264 (QRRPDLWRKARGGEPPADESGEVRR) is disordered. Acidic residues predominate over residues 255 to 264 (PADESGEVRR).

The protein belongs to the RNA methyltransferase TrmD family. Homodimer.

It localises to the cytoplasm. The catalysed reaction is guanosine(37) in tRNA + S-adenosyl-L-methionine = N(1)-methylguanosine(37) in tRNA + S-adenosyl-L-homocysteine + H(+). In terms of biological role, specifically methylates guanosine-37 in various tRNAs. This Sorangium cellulosum (strain So ce56) (Polyangium cellulosum (strain So ce56)) protein is tRNA (guanine-N(1)-)-methyltransferase.